The primary structure comprises 250 residues: NAD-dependent protein deacetylase (250 aa).

The Deacetylase sirtuin-type domain occupies 1-244 (MECDKVGDLL…PCVVDYIKSQ (244 aa)). Residues alanine 22, threonine 26, phenylalanine 33, arginine 34, glutamine 98, isoleucine 100, aspartate 101, and histidine 116 each coordinate NAD(+). Phenylalanine 33 provides a ligand contact to nicotinamide. Residues isoleucine 100 and aspartate 101 each contribute to the nicotinamide site. The Proton acceptor role is filled by histidine 116. Positions 124, 127, 149, and 151 each coordinate Zn(2+). Residues serine 187, serine 188, asparagine 212, and valine 230 each contribute to the NAD(+) site.

Belongs to the sirtuin family. Class U subfamily. Zn(2+) is required as a cofactor.

It localises to the cytoplasm. It catalyses the reaction N(6)-acetyl-L-lysyl-[protein] + NAD(+) + H2O = 2''-O-acetyl-ADP-D-ribose + nicotinamide + L-lysyl-[protein]. Functionally, NAD-dependent protein deacetylase which modulates the activities of several enzymes which are inactive in their acetylated form. Deacetylates the N-terminal lysine residue of Alba, the major archaeal chromatin protein and that, in turn, increases Alba's DNA binding affinity, thereby repressing transcription. The sequence is that of NAD-dependent protein deacetylase from Sulfurisphaera tokodaii (strain DSM 16993 / JCM 10545 / NBRC 100140 / 7) (Sulfolobus tokodaii).